A 204-amino-acid polypeptide reads, in one-letter code: 34 kDa membrane antigen (204 aa).

Residues 1 to 19 form the signal peptide; that stretch reads MKRVSLLGSAAIFALVFSA. The N-palmitoyl cysteine moiety is linked to residue C20. C20 carries S-diacylglycerol cysteine lipidation.

The protein belongs to the UPF0423 family.

It is found in the cell membrane. This antigen is a pathogen-specific membrane immunogen. The sequence is that of 34 kDa membrane antigen (tpd) from Treponema pallidum (strain Nichols).